Consider the following 832-residue polypeptide: Putative pentatricopeptide repeat-containing protein At5g08310, mitochondrial (832 aa).

The transit peptide at 1–27 (MAFSRIALLCQRFSRQQQQRQLLHRPL) directs the protein to the mitochondrion. PPR repeat units follow at residues 105–139 (DMYA…RCFM), 140–174 (SPGA…GLCV), 176–212 (NAYT…GFHF), 213–247 (DKFT…GWLD), 252–281 (TILV…DIRL), 282–316 (NYKT…GMNA), 317–351 (DIAL…GIPP), 352–383 (DRGI…IDKK), 385–415 (VMLL…LMGN), 438–472 (DSDS…GLIP), 473–507 (GPMM…GVEP), 508–542 (SQFT…GFEP), 543–577 (WIKH…GFLG), 578–612 (HMVA…GHCP), 613–647 (DVIA…GLKP), 648–682 (TVAT…EKNP), 683–717 (DVIT…DCYP), 718–752 (NRIT…EMEP), and 753–787 (DSAV…GRFP).

It belongs to the PPR family. P subfamily.

It is found in the mitochondrion. The sequence is that of Putative pentatricopeptide repeat-containing protein At5g08310, mitochondrial from Arabidopsis thaliana (Mouse-ear cress).